Consider the following 147-residue polypeptide: Fibromodulin (147 aa).

LRR repeat units lie at residues 1–15 (LDHN…PLPR), 16–37 (SLRE…ALEG), 40–61 (NLTA…MRGL), 63–84 (SLIL…LPSA), 85–105 (LEQL…YFRG), and 108–128 (KLLY…ASNT). The N-linked (GlcNAc...) asparagine glycan is linked to Asn-5. Asn-40 is a glycosylation site (N-linked (GlcNAc...) asparagine). Residue Asn-130 is glycosylated (N-linked (GlcNAc...) asparagine). An LRR 7 repeat occupies 133–147 (SLLELDLSYNQLQKI).

The protein belongs to the small leucine-rich proteoglycan (SLRP) family. SLRP class II subfamily. As to quaternary structure, binds to type I and type II collagen. Binds keratan sulfate chains. In terms of processing, sulfated on tyrosine residues. Post-translationally, the N-terminus is blocked by a pyrrolidone carboxylic acid generated by post-translational modification of N-terminal glutamine.

Its subcellular location is the secreted. It is found in the extracellular space. It localises to the extracellular matrix. Its function is as follows. Affects the rate of fibrils formation. May have a primary role in collagen fibrillogenesis. This Oryctolagus cuniculus (Rabbit) protein is Fibromodulin (FMOD).